The primary structure comprises 254 residues: Small ribosomal subunit protein uS2 (254 aa).

Positions 225 to 254 (ALSERKREKDDAKLKEDEESKKASDKAEIQ) are disordered. Residues 226 to 254 (LSERKREKDDAKLKEDEESKKASDKAEIQ) are compositionally biased toward basic and acidic residues.

This sequence belongs to the universal ribosomal protein uS2 family.

This is Small ribosomal subunit protein uS2 from Cytophaga hutchinsonii (strain ATCC 33406 / DSM 1761 / CIP 103989 / NBRC 15051 / NCIMB 9469 / D465).